Here is a 531-residue protein sequence, read N- to C-terminus: Laccase-4 (531 aa).

An N-terminal signal peptide occupies residues 1 to 19 (MLSSITLLPLLAAVSTPAF). Plastocyanin-like domains are found at residues 23–146 (RNYK…LVIY), 158–315 (VDDA…LHYE), and 384–507 (SLPT…VSSR). An N-linked (GlcNAc...) asparagine glycan is attached at Asn-66. Positions 83 and 85 each coordinate Cu cation. Cys-104 and Cys-528 are disulfide-bonded. N-linked (GlcNAc...) asparagine glycosylation is present at Asn-109. The Cu cation site is built by His-128 and His-130. Residues Asn-186, Asn-231, Asn-280, and Asn-395 are each glycosylated (N-linked (GlcNAc...) asparagine). Residues His-427, His-430, His-432, His-479, Cys-480, and His-481 each coordinate Cu cation.

The protein belongs to the multicopper oxidase family. As to quaternary structure, homodimer. The cofactor is Cu cation. In mycelia, at a higher level than LCC1, LCC2 and LCC3.

The protein localises to the secreted. The catalysed reaction is 4 hydroquinone + O2 = 4 benzosemiquinone + 2 H2O. Functionally, lignin degradation and detoxification of lignin-derived products. The chain is Laccase-4 (LCC4) from Thanatephorus cucumeris (Black scurf of potato).